A 128-amino-acid chain; its full sequence is Conopressin-conophysin (128 aa).

Residues 1–27 (MTRSAMQMGRLTLVLCLLLLLLLTTQA) form the signal peptide. A disulfide bond links Cys-28 and Cys-33. Residue Gly-36 is modified to Glycine amide. The propeptide occupies 37–44 (GKRDVDER). 7 disulfides stabilise this stretch: Cys-50/Cys-90, Cys-53/Cys-64, Cys-58/Cys-80, Cys-65/Cys-70, Cys-97/Cys-115, Cys-109/Cys-127, and Cys-116/Cys-121.

Belongs to the vasopressin/oxytocin family. Expressed by the venom gland.

Its subcellular location is the secreted. In terms of biological role, targets vasopressin-oxytocin related receptors. Is more active on fish receptors than on their human counterparts, supporting an evolved role of this conopressin in the envenomation process. Acts as an agonist on zebrafish vasopressin receptors V1a1R (EC(50)=10.6 nM), V1a2R (EC(50)=44.06 nM, partial agonist), V2R (EC(50)=299.2 nM) and oxytocin receptor (EC(50)=353.73 nM, partial agonist). Shows a weaker activity on human receptors AVPR1B (EC(50)=51.92 nM), AVPR1A (EC(50)=123.78 nM), AVPR2 (EC(50)=299.2 nM) and oxytocin (OXTR) receptor (EC(50)=455.66 nM, partial agonist). In vivo, exhibits grooming and scratching behavior in mice, following intracerebral injection. The protein is Conopressin-conophysin of Conus geographus (Geography cone).